The primary structure comprises 76 residues: Conotoxin MaIr332 (76 aa).

A signal peptide spans 1–21 (MKLTCVIVAVLFLTAWTFVTA). Positions 22–48 (DDSGNGLENLFSKAHHEMKNPKDSKLN) are excised as a propeptide. Intrachain disulfides connect cysteine 51–cysteine 66, cysteine 58–cysteine 70, and cysteine 65–cysteine 75.

This sequence belongs to the conotoxin O1 superfamily. As to expression, expressed by the venom duct.

It is found in the secreted. The chain is Conotoxin MaIr332 from Conus marmoreus (Marble cone).